The following is a 344-amino-acid chain: Uroporphyrinogen decarboxylase (344 aa).

Residues 23–27 (RQAGR), D73, Y149, T204, and H321 each bind substrate.

It belongs to the uroporphyrinogen decarboxylase family. In terms of assembly, homodimer.

It is found in the cytoplasm. It catalyses the reaction uroporphyrinogen III + 4 H(+) = coproporphyrinogen III + 4 CO2. It functions in the pathway porphyrin-containing compound metabolism; protoporphyrin-IX biosynthesis; coproporphyrinogen-III from 5-aminolevulinate: step 4/4. In terms of biological role, catalyzes the decarboxylation of four acetate groups of uroporphyrinogen-III to yield coproporphyrinogen-III. This is Uroporphyrinogen decarboxylase from Francisella tularensis subsp. tularensis (strain FSC 198).